The primary structure comprises 325 residues: Biotin synthase (325 aa).

Residues 42-270 (YKVQLASLLS…QSRVRLSAGR (229 aa)) form the Radical SAM core domain. Positions 57, 61, and 64 each coordinate [4Fe-4S] cluster. The [2Fe-2S] cluster site is built by C101, C133, C193, and R265.

The protein belongs to the radical SAM superfamily. Biotin synthase family. As to quaternary structure, homodimer. Requires [4Fe-4S] cluster as cofactor. [2Fe-2S] cluster is required as a cofactor.

It catalyses the reaction (4R,5S)-dethiobiotin + (sulfur carrier)-SH + 2 reduced [2Fe-2S]-[ferredoxin] + 2 S-adenosyl-L-methionine = (sulfur carrier)-H + biotin + 2 5'-deoxyadenosine + 2 L-methionine + 2 oxidized [2Fe-2S]-[ferredoxin]. It participates in cofactor biosynthesis; biotin biosynthesis; biotin from 7,8-diaminononanoate: step 2/2. Catalyzes the conversion of dethiobiotin (DTB) to biotin by the insertion of a sulfur atom into dethiobiotin via a radical-based mechanism. In Synechococcus sp. (strain WH7803), this protein is Biotin synthase.